The chain runs to 311 residues: MYSEADRTLWHGRIHDNDNHAHFTNSQLVQVVDAEGELTERFDVGILGYAVDRGVYLNQGRVGTKQGPDAIRTKFGNLPLMHDLSIADFGNVTTEEKFVEDVQHEYAELIDKTNDYAKFHLLIGGGHDISYAHFKGLKALYPEQSIGVINIDAHFDLRDSEYGTSGTGFKQILDEDADAGYLVLGLQEAGNTQHLFEVAEQYDVKYVLAEDIDYDTTDEIIQSFIEQYDIIMLTLCLDVIDSAFAPGVSAPCSFGLTPQQVERLIRAVLSYGKTRHLSIAEMNPEYDIDGRTAKLVGHIMFFAVHRNPSIL.

6 residues coordinate Mn(2+): H127, D152, H154, D156, C236, and D238.

This sequence belongs to the arginase family. Mn(2+) is required as a cofactor.

It catalyses the reaction N-formimidoyl-L-glutamate + H2O = formamide + L-glutamate. Its pathway is amino-acid degradation; L-histidine degradation into L-glutamate; L-glutamate from N-formimidoyl-L-glutamate (hydrolase route): step 1/1. Its function is as follows. Catalyzes the conversion of N-formimidoyl-L-glutamate to L-glutamate and formamide. This is Formimidoylglutamase from Macrococcus caseolyticus (strain JCSC5402) (Macrococcoides caseolyticum).